A 447-amino-acid chain; its full sequence is N-succinylarginine dihydrolase (447 aa).

Substrate contacts are provided by residues 19-28 (AGLSFGNEAS), Asn-110, and 137-138 (HR). Glu-174 is a catalytic residue. A substrate-binding site is contributed by Arg-212. The active site involves His-248. Asp-250 and Asn-359 together coordinate substrate. The Nucleophile role is filled by Cys-365.

This sequence belongs to the succinylarginine dihydrolase family. As to quaternary structure, homodimer.

It carries out the reaction N(2)-succinyl-L-arginine + 2 H2O + 2 H(+) = N(2)-succinyl-L-ornithine + 2 NH4(+) + CO2. The protein operates within amino-acid degradation; L-arginine degradation via AST pathway; L-glutamate and succinate from L-arginine: step 2/5. Its function is as follows. Catalyzes the hydrolysis of N(2)-succinylarginine into N(2)-succinylornithine, ammonia and CO(2). The protein is N-succinylarginine dihydrolase of Salmonella dublin (strain CT_02021853).